The following is a 213-amino-acid chain: Probable GTP-binding protein EngB (213 aa).

The EngB-type G domain maps to 30-204 (EGFEVAFAGR…YTVLAGWMEL (175 aa)). GTP-binding positions include 38–45 (GRSNAGKS), 64–68 (GRTQL), 82–85 (DLPG), 149–152 (TKAD), and 182–185 (LFSA). Positions 45 and 66 each coordinate Mg(2+).

Belongs to the TRAFAC class TrmE-Era-EngA-EngB-Septin-like GTPase superfamily. EngB GTPase family. The cofactor is Mg(2+).

Functionally, necessary for normal cell division and for the maintenance of normal septation. The chain is Probable GTP-binding protein EngB from Pseudomonas fluorescens (strain ATCC BAA-477 / NRRL B-23932 / Pf-5).